Reading from the N-terminus, the 243-residue chain is Uridylate kinase (243 aa).

An ATP-binding site is contributed by 15–18; that stretch reads KLSG. Residue G56 participates in UMP binding. Residues G57 and R61 each coordinate ATP. 138–145 provides a ligand contact to UMP; that stretch reads TGNPYFST. The ATP site is built by N166, Y172, and D175.

This sequence belongs to the UMP kinase family. Homohexamer.

The protein localises to the cytoplasm. It catalyses the reaction UMP + ATP = UDP + ADP. It participates in pyrimidine metabolism; CTP biosynthesis via de novo pathway; UDP from UMP (UMPK route): step 1/1. Its activity is regulated as follows. Inhibited by UTP. Its function is as follows. Catalyzes the reversible phosphorylation of UMP to UDP. This Mycoplasma genitalium (strain ATCC 33530 / DSM 19775 / NCTC 10195 / G37) (Mycoplasmoides genitalium) protein is Uridylate kinase.